Here is a 493-residue protein sequence, read N- to C-terminus: Protein kinase PINOID 2 (493 aa).

Positions Met-1 to Lys-53 are disordered. Residues Ile-27–Asp-44 show a composition bias toward low complexity. Residues Phe-80 to Phe-443 form the Protein kinase domain. ATP contacts are provided by residues Leu-86–Val-94 and Lys-120. The active-site Proton acceptor is Asp-216. Over residues Gly-295–Gly-306 the composition is skewed to gly residues. Disordered stretches follow at residues Gly-295–Pro-320 and Glu-458–Phe-493. The segment covering Asp-307–Glu-319 has biased composition (acidic residues). The 50-residue stretch at Lys-444–Phe-493 folds into the AGC-kinase C-terminal domain. Residues Ser-474–Phe-493 show a composition bias toward basic and acidic residues.

The protein belongs to the protein kinase superfamily. Ser/Thr protein kinase family.

It carries out the reaction L-seryl-[protein] + ATP = O-phospho-L-seryl-[protein] + ADP + H(+). It catalyses the reaction L-threonyl-[protein] + ATP = O-phospho-L-threonyl-[protein] + ADP + H(+). Functionally, serine/threonine-protein kinase involved in the regulation of auxin signaling. This is Protein kinase PINOID 2 (PID2) from Oryza sativa subsp. japonica (Rice).